Reading from the N-terminus, the 267-residue chain is L-aspartate dehydrogenase (267 aa).

NAD(+) is bound by residues Ala124 and Asn190. His220 is an active-site residue.

It belongs to the L-aspartate dehydrogenase family.

It carries out the reaction L-aspartate + NADP(+) + H2O = oxaloacetate + NH4(+) + NADPH + H(+). The enzyme catalyses L-aspartate + NAD(+) + H2O = oxaloacetate + NH4(+) + NADH + H(+). Its pathway is cofactor biosynthesis; NAD(+) biosynthesis; iminoaspartate from L-aspartate (dehydrogenase route): step 1/1. Functionally, specifically catalyzes the NAD or NADP-dependent dehydrogenation of L-aspartate to iminoaspartate. The protein is L-aspartate dehydrogenase of Polaromonas sp. (strain JS666 / ATCC BAA-500).